Consider the following 366-residue polypeptide: Histidinol-phosphate aminotransferase (366 aa).

At Lys-222 the chain carries N6-(pyridoxal phosphate)lysine.

Belongs to the class-II pyridoxal-phosphate-dependent aminotransferase family. Histidinol-phosphate aminotransferase subfamily. As to quaternary structure, homodimer. The cofactor is pyridoxal 5'-phosphate.

The catalysed reaction is L-histidinol phosphate + 2-oxoglutarate = 3-(imidazol-4-yl)-2-oxopropyl phosphate + L-glutamate. It functions in the pathway amino-acid biosynthesis; L-histidine biosynthesis; L-histidine from 5-phospho-alpha-D-ribose 1-diphosphate: step 7/9. The polypeptide is Histidinol-phosphate aminotransferase (Lysinibacillus sphaericus (strain C3-41)).